We begin with the raw amino-acid sequence, 222 residues long: Translation initiation factor 6 (222 aa).

The protein belongs to the eIF-6 family.

Functionally, binds to the 50S ribosomal subunit and prevents its association with the 30S ribosomal subunit to form the 70S initiation complex. In Methanothermobacter thermautotrophicus (strain ATCC 29096 / DSM 1053 / JCM 10044 / NBRC 100330 / Delta H) (Methanobacterium thermoautotrophicum), this protein is Translation initiation factor 6.